Consider the following 211-residue polypeptide: Dual specificity protein phosphatase 26 (211 aa).

Positions 60–207 constitute a Tyrosine-protein phosphatase domain; the sequence is NHADEVWPGL…LLALDRRLRQ (148 aa). Catalysis depends on cysteine 152, which acts as the Phosphocysteine intermediate.

It belongs to the protein-tyrosine phosphatase family. Non-receptor class dual specificity subfamily. In terms of assembly, interacts with HSF4.

The protein localises to the cytoplasm. Its subcellular location is the nucleus. The protein resides in the golgi apparatus. It carries out the reaction O-phospho-L-tyrosyl-[protein] + H2O = L-tyrosyl-[protein] + phosphate. The enzyme catalyses O-phospho-L-seryl-[protein] + H2O = L-seryl-[protein] + phosphate. The catalysed reaction is O-phospho-L-threonyl-[protein] + H2O = L-threonyl-[protein] + phosphate. Its function is as follows. Inactivates MAPK1 and MAPK3 which leads to dephosphorylation of heat shock factor protein 4 and a reduction in its DNA-binding activity. The chain is Dual specificity protein phosphatase 26 (Dusp26) from Rattus norvegicus (Rat).